The following is a 934-amino-acid chain: Serine/threonine-protein kinase atg1 (934 aa).

One can recognise a Protein kinase domain in the interval 22 to 328 (YTRLDEIGRG…SDFFDCDTIT (307 aa)). Residues 28-36 (IGRGSFATV) and K51 contribute to the ATP site. D165 acts as the Proton acceptor in catalysis. 6 disordered regions span residues 335–432 (IADD…PRRP), 462–481 (RNTYAGVPQTEKQAEKTKEE), 531–580 (RRPG…YGQS), 684–703 (TDPSGRANVPGGERDSTDLT), 800–822 (RLPPDHPSHPSNHSVGPSVGSGA), and 878–900 (EEEEVSRSEPGSGTDRGDARRDG). Positions 340–368 (PSTSRRSSVAVNTSGSTSRPQSRTGSRTP) are enriched in polar residues. Positions 371 to 386 (MKREKDASYPGKKDDQ) are enriched in basic and acidic residues. Positions 538-550 (SSTATATSPLATT) are enriched in low complexity. Positions 561–577 (ARADSTHTRQGSYERRY) are enriched in basic and acidic residues.

It belongs to the protein kinase superfamily. Ser/Thr protein kinase family. APG1/unc-51/ULK1 subfamily. In terms of assembly, homodimer. Forms a ternary complex with ATG13 and ATG17.

The protein localises to the cytoplasm. Its subcellular location is the preautophagosomal structure membrane. The enzyme catalyses L-seryl-[protein] + ATP = O-phospho-L-seryl-[protein] + ADP + H(+). It carries out the reaction L-threonyl-[protein] + ATP = O-phospho-L-threonyl-[protein] + ADP + H(+). Its function is as follows. Serine/threonine protein kinase involved in the cytoplasm to vacuole transport (Cvt) and found to be essential in autophagy, where it is required for the formation of autophagosomes. Involved in the clearance of protein aggregates which cannot be efficiently cleared by the proteasome. Required for selective autophagic degradation of the nucleus (nucleophagy) as well as for mitophagy which contributes to regulate mitochondrial quantity and quality by eliminating the mitochondria to a basal level to fulfill cellular energy requirements and preventing excess ROS production. Also involved in endoplasmic reticulum-specific autophagic process, in selective removal of ER-associated degradation (ERAD) substrates. Plays a key role in ATG9 and ATG23 cycling through the pre-autophagosomal structure and is necessary to promote ATG18 binding to ATG9 through phosphorylation of ATG9. Catalyzes phosphorylation of ATG4, decreasing the interaction between ATG4 and ATG8 and impairing deconjugation of PE-conjugated forms of ATG8. Required for conidiation and development of aerial hyphae. The protein is Serine/threonine-protein kinase atg1 of Aspergillus oryzae (strain ATCC 42149 / RIB 40) (Yellow koji mold).